We begin with the raw amino-acid sequence, 448 residues long: Chromosomal replication initiator protein DnaA (448 aa).

The tract at residues 1-73 (MNAQLKQLWT…INAIKLITSK (73 aa)) is domain I, interacts with DnaA modulators. The tract at residues 73–109 (KKYNIEFSITSEEIFNNQQLKPKSSNDNIVVNDEMTS) is domain II. Residues 110 to 326 (ILNPKYTFDS…GALIRIVAYS (217 aa)) form a domain III, AAA+ region region. 4 residues coordinate ATP: Gly-154, Gly-156, Lys-157, and Thr-158. Residues 327–448 (SLTNREISVD…DDLNKKITNN (122 aa)) form a domain IV, binds dsDNA region.

The protein belongs to the DnaA family. As to quaternary structure, oligomerizes as a right-handed, spiral filament on DNA at oriC.

Its subcellular location is the cytoplasm. Plays an essential role in the initiation and regulation of chromosomal replication. ATP-DnaA binds to the origin of replication (oriC) to initiate formation of the DNA replication initiation complex once per cell cycle. Binds the DnaA box (a 9 base pair repeat at the origin) and separates the double-stranded (ds)DNA. Forms a right-handed helical filament on oriC DNA; dsDNA binds to the exterior of the filament while single-stranded (ss)DNA is stabiized in the filament's interior. The ATP-DnaA-oriC complex binds and stabilizes one strand of the AT-rich DNA unwinding element (DUE), permitting loading of DNA polymerase. After initiation quickly degrades to an ADP-DnaA complex that is not apt for DNA replication. Binds acidic phospholipids. The sequence is that of Chromosomal replication initiator protein DnaA from Clostridium novyi (strain NT).